Consider the following 459-residue polypeptide: Ribulose bisphosphate carboxylase large chain (459 aa).

Lysine 4 is subject to N6,N6,N6-trimethyllysine. Residues asparagine 113 and threonine 163 each contribute to the substrate site. Lysine 165 acts as the Proton acceptor in catalysis. Lysine 167 provides a ligand contact to substrate. Mg(2+)-binding residues include lysine 191, aspartate 193, and glutamate 194. Lysine 191 is subject to N6-carboxylysine. Histidine 284 serves as the catalytic Proton acceptor. Substrate contacts are provided by arginine 285, histidine 317, and serine 369.

This sequence belongs to the RuBisCO large chain family. Type I subfamily. As to quaternary structure, heterohexadecamer of 8 large chains and 8 small chains; disulfide-linked. The disulfide link is formed within the large subunit homodimers. The cofactor is Mg(2+). The disulfide bond which can form in the large chain dimeric partners within the hexadecamer appears to be associated with oxidative stress and protein turnover.

It is found in the plastid. The protein localises to the chloroplast. It carries out the reaction 2 (2R)-3-phosphoglycerate + 2 H(+) = D-ribulose 1,5-bisphosphate + CO2 + H2O. It catalyses the reaction D-ribulose 1,5-bisphosphate + O2 = 2-phosphoglycolate + (2R)-3-phosphoglycerate + 2 H(+). Its function is as follows. RuBisCO catalyzes two reactions: the carboxylation of D-ribulose 1,5-bisphosphate, the primary event in carbon dioxide fixation, as well as the oxidative fragmentation of the pentose substrate in the photorespiration process. Both reactions occur simultaneously and in competition at the same active site. The polypeptide is Ribulose bisphosphate carboxylase large chain (Apium graveolens (Celery)).